The chain runs to 100 residues: Succinate dehydrogenase subunit 7B, mitochondrial (100 aa).

Residues 1 to 25 form a disordered region; sequence MAFLLNNASISSHLRSSSSQKTGDA. The transit peptide at 1 to 32 directs the protein to the mitochondrion; it reads MAFLLNNASISSHLRSSSSQKTGDALSISRRG. Residues 9 to 19 show a composition bias toward low complexity; sequence SISSHLRSSSS.

In terms of assembly, component of complex II composed of eight subunits in plants: four classical SDH subunits SDH1, SDH2, SDH3 and SDH4 (a flavoprotein (FP), an iron-sulfur protein (IP), and a cytochrome b composed of a large and a small subunit.), as well as four subunits unknown in mitochondria from bacteria and heterotrophic eukaryotes.

It is found in the mitochondrion inner membrane. It participates in carbohydrate metabolism; tricarboxylic acid cycle. This Arabidopsis thaliana (Mouse-ear cress) protein is Succinate dehydrogenase subunit 7B, mitochondrial.